Here is a 165-residue protein sequence, read N- to C-terminus: Xanthine-guanine phosphoribosyltransferase (165 aa).

5-phospho-alpha-D-ribose 1-diphosphate contacts are provided by residues 41–42 and 98–106; these read RG and DDLTDTGKT. Asp-99 provides a ligand contact to Mg(2+). Guanine-binding residues include Asp-102 and Ile-145. Positions 102 and 145 each coordinate xanthine. Residues 102-106 and 144-145 each bind GMP; these read DTGKT and WI.

This sequence belongs to the purine/pyrimidine phosphoribosyltransferase family. XGPT subfamily. As to quaternary structure, homotetramer. The cofactor is Mg(2+).

Its subcellular location is the cell inner membrane. It carries out the reaction GMP + diphosphate = guanine + 5-phospho-alpha-D-ribose 1-diphosphate. The catalysed reaction is XMP + diphosphate = xanthine + 5-phospho-alpha-D-ribose 1-diphosphate. It catalyses the reaction IMP + diphosphate = hypoxanthine + 5-phospho-alpha-D-ribose 1-diphosphate. It functions in the pathway purine metabolism; GMP biosynthesis via salvage pathway; GMP from guanine: step 1/1. It participates in purine metabolism; XMP biosynthesis via salvage pathway; XMP from xanthine: step 1/1. Functionally, purine salvage pathway enzyme that catalyzes the transfer of the ribosyl-5-phosphate group from 5-phospho-alpha-D-ribose 1-diphosphate (PRPP) to the N9 position of the 6-oxopurines guanine and xanthine to form the corresponding ribonucleotides GMP (guanosine 5'-monophosphate) and XMP (xanthosine 5'-monophosphate), with the release of PPi. To a lesser extent, also acts on hypoxanthine. In Brucella anthropi (strain ATCC 49188 / DSM 6882 / CCUG 24695 / JCM 21032 / LMG 3331 / NBRC 15819 / NCTC 12168 / Alc 37) (Ochrobactrum anthropi), this protein is Xanthine-guanine phosphoribosyltransferase.